Here is a 1099-residue protein sequence, read N- to C-terminus: Probable inorganic carbon transporter subunit DabA (1099 aa).

The interval 175 to 194 (RQGRRRFATTERRTRRTRRS) is disordered. Positions 176-194 (QGRRRFATTERRTRRTRRS) are enriched in basic residues. Cys-514, Asp-516, His-722, and Cys-737 together coordinate Zn(2+). The interval 1071–1099 (AGAGAAQPTRDAIELPEQASGPLPARDGQ) is disordered.

The protein belongs to the inorganic carbon transporter (TC 9.A.2) DabA family. Forms a complex with DabB. Zn(2+) serves as cofactor.

It is found in the cell membrane. In terms of biological role, part of an energy-coupled inorganic carbon pump. This is Probable inorganic carbon transporter subunit DabA from Parafrankia sp. (strain EAN1pec).